Here is a 300-residue protein sequence, read N- to C-terminus: Probable alpha-L-glutamate ligase (300 aa).

The region spanning 104–287 is the ATP-grasp domain; that stretch reads LQLLARQGID…IAGRMIEYIE (184 aa). Residues lysine 141, 178 to 179, aspartate 187, and 211 to 213 each bind ATP; these read EY and RSN. Mg(2+)-binding residues include aspartate 248, glutamate 260, and asparagine 262. Positions 248, 260, and 262 each coordinate Mn(2+).

This sequence belongs to the RimK family. Mg(2+) serves as cofactor. The cofactor is Mn(2+).

This chain is Probable alpha-L-glutamate ligase, found in Serratia proteamaculans (strain 568).